The following is a 330-amino-acid chain: Methionyl-tRNA formyltransferase (330 aa).

Ser-112–Pro-115 lines the (6S)-5,6,7,8-tetrahydrofolate pocket.

It belongs to the Fmt family.

It carries out the reaction L-methionyl-tRNA(fMet) + (6R)-10-formyltetrahydrofolate = N-formyl-L-methionyl-tRNA(fMet) + (6S)-5,6,7,8-tetrahydrofolate + H(+). Functionally, attaches a formyl group to the free amino group of methionyl-tRNA(fMet). The formyl group appears to play a dual role in the initiator identity of N-formylmethionyl-tRNA by promoting its recognition by IF2 and preventing the misappropriation of this tRNA by the elongation apparatus. The sequence is that of Methionyl-tRNA formyltransferase from Synechococcus sp. (strain RCC307).